Reading from the N-terminus, the 687-residue chain is Translation initiation factor IF-2 (687 aa).

The tr-type G domain occupies Lys186–Lys355. A G1 region spans residues Gly195–Thr202. Gly195–Thr202 serves as a coordination point for GTP. The G2 stretch occupies residues Gly220 to His224. The tract at residues Asp241–Gly244 is G3. Residues Asp241–His245 and Asn295–Asp298 contribute to the GTP site. Residues Asn295–Asp298 form a G4 region. The tract at residues Ser331–Lys333 is G5.

The protein belongs to the TRAFAC class translation factor GTPase superfamily. Classic translation factor GTPase family. IF-2 subfamily.

Its subcellular location is the cytoplasm. In terms of biological role, one of the essential components for the initiation of protein synthesis. Protects formylmethionyl-tRNA from spontaneous hydrolysis and promotes its binding to the 30S ribosomal subunits. Also involved in the hydrolysis of GTP during the formation of the 70S ribosomal complex. This Clostridium botulinum (strain Alaska E43 / Type E3) protein is Translation initiation factor IF-2.